The sequence spans 500 residues: ATP synthase subunit alpha (500 aa).

169–176 (GDRQTGKT) provides a ligand contact to ATP.

It belongs to the ATPase alpha/beta chains family. F-type ATPases have 2 components, CF(1) - the catalytic core - and CF(0) - the membrane proton channel. CF(1) has five subunits: alpha(3), beta(3), gamma(1), delta(1), epsilon(1). CF(0) has three main subunits: a(1), b(2) and c(9-12). The alpha and beta chains form an alternating ring which encloses part of the gamma chain. CF(1) is attached to CF(0) by a central stalk formed by the gamma and epsilon chains, while a peripheral stalk is formed by the delta and b chains.

The protein resides in the cell inner membrane. It catalyses the reaction ATP + H2O + 4 H(+)(in) = ADP + phosphate + 5 H(+)(out). Its function is as follows. Produces ATP from ADP in the presence of a proton gradient across the membrane. The alpha chain is a regulatory subunit. This is ATP synthase subunit alpha from Fusobacterium nucleatum subsp. nucleatum (strain ATCC 25586 / DSM 15643 / BCRC 10681 / CIP 101130 / JCM 8532 / KCTC 2640 / LMG 13131 / VPI 4355).